Here is a 317-residue protein sequence, read N- to C-terminus: Aspartate carbamoyltransferase catalytic subunit (317 aa).

Carbamoyl phosphate contacts are provided by Arg-64 and Thr-65. Lys-92 contributes to the L-aspartate binding site. Residues Arg-114, His-144, and Gln-147 each contribute to the carbamoyl phosphate site. The L-aspartate site is built by Arg-177 and Arg-232. Residues Gly-273 and Pro-274 each coordinate carbamoyl phosphate.

It belongs to the aspartate/ornithine carbamoyltransferase superfamily. ATCase family. Heterododecamer (2C3:3R2) of six catalytic PyrB chains organized as two trimers (C3), and six regulatory PyrI chains organized as three dimers (R2).

The enzyme catalyses carbamoyl phosphate + L-aspartate = N-carbamoyl-L-aspartate + phosphate + H(+). The protein operates within pyrimidine metabolism; UMP biosynthesis via de novo pathway; (S)-dihydroorotate from bicarbonate: step 2/3. Its function is as follows. Catalyzes the condensation of carbamoyl phosphate and aspartate to form carbamoyl aspartate and inorganic phosphate, the committed step in the de novo pyrimidine nucleotide biosynthesis pathway. In Thiobacillus denitrificans (strain ATCC 25259 / T1), this protein is Aspartate carbamoyltransferase catalytic subunit.